The primary structure comprises 255 residues: ParA family protein TC_0871 (255 aa).

The protein belongs to the ParA family.

The chain is ParA family protein TC_0871 from Chlamydia muridarum (strain MoPn / Nigg).